Here is a 202-residue protein sequence, read N- to C-terminus: Small ribosomal subunit protein uS4 (202 aa).

A compositionally biased stretch (basic residues) spans 1 to 13; it reads MSRYRGPRLRVTR. The tract at residues 1–42 is disordered; that stretch reads MSRYRGPRLRVTRRLGELPGLTRKASKKSNPPGQHGQARRKR. Residues 90–152 enclose the S4 RNA-binding domain; that stretch reads NRLDNVCFRL…KASKKLVEGN (63 aa).

Belongs to the universal ribosomal protein uS4 family. In terms of assembly, part of the 30S ribosomal subunit. Contacts protein S5. The interaction surface between S4 and S5 is involved in control of translational fidelity.

Its function is as follows. One of the primary rRNA binding proteins, it binds directly to 16S rRNA where it nucleates assembly of the body of the 30S subunit. With S5 and S12 plays an important role in translational accuracy. This is Small ribosomal subunit protein uS4 from Prochlorococcus marinus (strain MIT 9312).